A 240-amino-acid polypeptide reads, in one-letter code: 1-(5-phosphoribosyl)-5-[(5-phosphoribosylamino)methylideneamino] imidazole-4-carboxamide isomerase (240 aa).

D9 acts as the Proton acceptor in catalysis. The Proton donor role is filled by D131.

The protein belongs to the HisA/HisF family.

It is found in the cytoplasm. The enzyme catalyses 1-(5-phospho-beta-D-ribosyl)-5-[(5-phospho-beta-D-ribosylamino)methylideneamino]imidazole-4-carboxamide = 5-[(5-phospho-1-deoxy-D-ribulos-1-ylimino)methylamino]-1-(5-phospho-beta-D-ribosyl)imidazole-4-carboxamide. It participates in amino-acid biosynthesis; L-histidine biosynthesis; L-histidine from 5-phospho-alpha-D-ribose 1-diphosphate: step 4/9. In Cytophaga hutchinsonii (strain ATCC 33406 / DSM 1761 / CIP 103989 / NBRC 15051 / NCIMB 9469 / D465), this protein is 1-(5-phosphoribosyl)-5-[(5-phosphoribosylamino)methylideneamino] imidazole-4-carboxamide isomerase.